Reading from the N-terminus, the 528-residue chain is Protein arginine N-methyltransferase 3 (528 aa).

The segment at 1 to 42 is disordered; sequence MCSLAAGNGQGAELGPEPLELSDSGDDAGWEDEDADAEPAQG. C2 is subject to N-acetylcysteine. A phosphoserine mark is found at S22 and S24. Over residues 23–37 the composition is skewed to acidic residues; it reads DSGDDAGWEDEDADA. The C2H2-type zinc finger occupies 46–69; it reads TPCLFCDRLFRSAEETFSHCKLEH. S169 bears the Phosphoserine mark. The interval 184 to 528 is mediates interaction with ALDH1A1; the sequence is MKQFAQDFVM…NSSTQTYSLQ (345 aa). Residues 214-528 form the SAM-dependent MTase PRMT-type domain; that stretch reads DGVYFSSYGH…NSSTQTYSLQ (315 aa). S-adenosyl-L-homocysteine-binding residues include R236, G260, D282, S284, I310, and E311. Active-site residues include E326 and E335.

Belongs to the class I-like SAM-binding methyltransferase superfamily. Protein arginine N-methyltransferase family. As to quaternary structure, monomer and homodimer. Interacts with EPB41L3 (via FERM domain); the interaction is direct and inhibits the protein-arginine N-methyltransferase activity of PRMT3. Interacts with the 40S ribosomal protein RPS2. Interacts with ALDH1A1; the interaction is direct, inhibits ALDH1A1 aldehyde dehydrogenase activity and is independent of the methyltransferase activity of PRMT3. Ubiquitously expressed.

Its subcellular location is the cytoplasm. The protein resides in the cytosol. It is found in the nucleus. It catalyses the reaction L-arginyl-[protein] + S-adenosyl-L-methionine = N(omega)-methyl-L-arginyl-[protein] + S-adenosyl-L-homocysteine + H(+). The enzyme catalyses L-arginyl-[protein] + 2 S-adenosyl-L-methionine = N(omega),N(omega)-dimethyl-L-arginyl-[protein] + 2 S-adenosyl-L-homocysteine + 2 H(+). With respect to regulation, inhibited by N-ethylmaleimide and high concentrations of zinc chloride. Functionally, protein-arginine N-methyltransferase that catalyzes both the monomethylation and asymmetric dimethylation of the guanidino nitrogens of arginine residues in target proteins, and therefore falls into the group of type I methyltransferases. Catalyzes the asymmetric arginine dimethylation at multiple sites in the Arg/Gly-rich region of small ribosomal subunit protein uS5/RPS2. Also appears to methylate other ribosomal proteins. May regulate retinoic acid synthesis and signaling by inhibiting ALDH1A1 retinal dehydrogenase activity. Contributes to methylation of histone H4 'Arg-3', a specific tag for epigenetic transcriptional activation. Promotes osteogenesis. The sequence is that of Protein arginine N-methyltransferase 3 from Rattus norvegicus (Rat).